Consider the following 37-residue polypeptide: Large ribosomal subunit protein bL36c (37 aa).

The protein belongs to the bacterial ribosomal protein bL36 family.

The protein localises to the plastid. Its subcellular location is the chloroplast. The sequence is that of Large ribosomal subunit protein bL36c from Bigelowiella natans (Pedinomonas minutissima).